The following is an 82-amino-acid chain: Small ribosomal subunit protein uS17 (82 aa).

This sequence belongs to the universal ribosomal protein uS17 family. In terms of assembly, part of the 30S ribosomal subunit.

One of the primary rRNA binding proteins, it binds specifically to the 5'-end of 16S ribosomal RNA. This is Small ribosomal subunit protein uS17 from Shewanella woodyi (strain ATCC 51908 / MS32).